Here is a 139-residue protein sequence, read N- to C-terminus: D-ribose pyranase (139 aa).

Histidine 20 (proton donor) is an active-site residue. Residues aspartate 28, histidine 106, and 128-130 contribute to the substrate site; that span reads YAN.

It belongs to the RbsD / FucU family. RbsD subfamily. Homodecamer.

It localises to the cytoplasm. It catalyses the reaction beta-D-ribopyranose = beta-D-ribofuranose. It participates in carbohydrate metabolism; D-ribose degradation; D-ribose 5-phosphate from beta-D-ribopyranose: step 1/2. In terms of biological role, catalyzes the interconversion of beta-pyran and beta-furan forms of D-ribose. This is D-ribose pyranase from Escherichia coli O127:H6 (strain E2348/69 / EPEC).